We begin with the raw amino-acid sequence, 1294 residues long: MEILRGSPALSAFRINKLLVRCKEHLLPVSDIYAEYVHFADVSTPLNNDEQAKLTRLLKYGPSLAEHEPQGHLLLVTPRPGTISPWSSKATDIAHNCGLSKVLRLERGLAFYIHAPTLNDEQWQQLGALLHDRMMESVFSDLKQAAALFSHHQPAPFKRIEILLQGRQALEEANVRLGLALAEDEIDYLLEAFNNLGRNPTDIELYMFAQANSEHCRHKIFNADWVIDGVTQPKSLFKMIKNTFEHTPDHVLSAYKDNAAVMEGSAVGRFYTDANGQYDYHQEDAHILMKVETHNHPTAISPWPGAATGSGGEIRDEGATGRGSKPKAGLVGFSVSNLRIPGFIQPWEEEFGKPDRIVSALDIMTEGPLGGAAFNNEFGRPALTGYFRTYEERVDSHNGEELRGYHKPIMLAGGIGNIRGDHVKKGEIIVGAKLIVLGGPSMNIGLGGGAASSMASGQSDADLDFASVQRDNPEMERRCQEVIDRCWQLGEANPILFIHDVGAGGLSNAMPELVSDGGRGGRFELRDILNDEPGMSPLEVWCNESQERYVLAVAPEQLAQFDEICRRERAPYAVIGEATEELHLTMNDRHFNNQPIDLPLDVLLGKTPKMLRDVERKQVEGTPLQRDDIYLAEAVERVLHLPVVAEKTFLITIGDRSVTGMVARDQMVGPWQVPVADCAVTTASLDSYYGEAMSIGERAPVALRNFAASARLAVGEALTNIAATHIGPLTRVKLSANWMAAAGHPGEDAGLYDAVKAVGEELCPALGLTIPVGKDSMSMKTRWQEEGEDRAVTSPMSLVISAFARVEDVRNTVTPQLRTGQDNALLLIDLGAGNKALGATALAQVYRQLGRKTADVHSPEQLAGFFNAIQELVAAKALLAYHDRSDGGLIVTLAEMAFAGHCGVTVDIASQGEDTLATLFNEELGAVIQIPAARRAEVDAILALHGLADCVHYLGQAEEGTRFTINQGAEAVYQESRSTLRRWWAETSWQMQRLRDNPQCADQEHIARQDDNDPGLNVSLTFDPKEDIAAPYIAKNVRPKVAVLREQGVNSHVEMAAAFHRAGFDAIDIHMSDLLANRRNLQDFQALVACGGFSYGDVLGAGEGWAKSILFNARVRDEFAEFFLRPQTLALGVCNGCQMMSNLRELIPGADLWPRFVRNKSDRFEARFSLVEVDKSPSLFMNDMAGSRMPIAVSHGEGQVEVRDDAHLAAIEEHGLVALRYINHYGQVTENYPANPNGSSNGITAVTSTSGRATVMMPHPERVFRTVSNSWHPEEWGEDGPWMRMFRNARRQLG.

The disordered stretch occupies residues Trp-303–Lys-325. Residues Gly-305–Asp-316, Thr-384–Tyr-386, and Ala-676 contribute to the ATP site. The Mg(2+) site is built by Asp-677, Glu-716, Asn-720, and Asp-883. Ser-885 is a binding site for ATP. Residues Val-1041–Gly-1294 form the Glutamine amidotransferase type-1 domain. Catalysis depends on Cys-1134, which acts as the Nucleophile. Catalysis depends on residues His-1259 and Glu-1261.

This sequence in the N-terminal section; belongs to the FGAMS family. As to quaternary structure, monomer.

It localises to the cytoplasm. It catalyses the reaction N(2)-formyl-N(1)-(5-phospho-beta-D-ribosyl)glycinamide + L-glutamine + ATP + H2O = 2-formamido-N(1)-(5-O-phospho-beta-D-ribosyl)acetamidine + L-glutamate + ADP + phosphate + H(+). Its pathway is purine metabolism; IMP biosynthesis via de novo pathway; 5-amino-1-(5-phospho-D-ribosyl)imidazole from N(2)-formyl-N(1)-(5-phospho-D-ribosyl)glycinamide: step 1/2. Its function is as follows. Phosphoribosylformylglycinamidine synthase involved in the purines biosynthetic pathway. Catalyzes the ATP-dependent conversion of formylglycinamide ribonucleotide (FGAR) and glutamine to yield formylglycinamidine ribonucleotide (FGAM) and glutamate. The sequence is that of Phosphoribosylformylglycinamidine synthase from Pectobacterium atrosepticum (strain SCRI 1043 / ATCC BAA-672) (Erwinia carotovora subsp. atroseptica).